A 900-amino-acid polypeptide reads, in one-letter code: Translation initiation factor IF-2 (900 aa).

Positions 48–310 (HLNRDRGNAP…KPSSLQQSFN (263 aa)) are disordered. Residues 68–82 (STLNVPSTGGKSKSV) show a composition bias toward polar residues. Composition is skewed to basic and acidic residues over residues 85-98 (EVRK…RDPI) and 108-164 (QARR…KEKV). A compositionally biased stretch (polar residues) spans 165–176 (TNQQNENMTKPA). Residues 177-237 (QSEKAKREAE…SATKPEESAD (61 aa)) show a composition bias toward basic and acidic residues. A compositionally biased stretch (basic residues) spans 263–277 (TRTRAAKVTKQKKGN). Residues 278-291 (RQSESKADREEARA) are compositionally biased toward basic and acidic residues. Residues 399–568 (FRAPVVTIMG…LLQAEVLELK (170 aa)) enclose the tr-type G domain. A G1 region spans residues 408-415 (GHVDHGKT). GTP is bound at residue 408 to 415 (GHVDHGKT). The interval 433 to 437 (GITQH) is G2. The G3 stretch occupies residues 454-457 (DTPG). GTP contacts are provided by residues 454–458 (DTPGH) and 508–511 (NKID). The segment at 508–511 (NKID) is G4. A G5 region spans residues 544 to 546 (SAK).

This sequence belongs to the TRAFAC class translation factor GTPase superfamily. Classic translation factor GTPase family. IF-2 subfamily.

It is found in the cytoplasm. In terms of biological role, one of the essential components for the initiation of protein synthesis. Protects formylmethionyl-tRNA from spontaneous hydrolysis and promotes its binding to the 30S ribosomal subunits. Also involved in the hydrolysis of GTP during the formation of the 70S ribosomal complex. This is Translation initiation factor IF-2 from Pectobacterium atrosepticum (strain SCRI 1043 / ATCC BAA-672) (Erwinia carotovora subsp. atroseptica).